We begin with the raw amino-acid sequence, 410 residues long: Platelet-activating factor acetylhydrolase IB subunit alpha (410 aa).

The interval 1-38 is required for self-association and interaction with PAFAH1B2 and PAFAH1B3; sequence MVLSQRQRDELNRAIADYLRSNGYEEAYSVFKKEAELD. The segment at 1–66 is interaction with NDE1; the sequence is MVLSQRQRDE…SVIRLQKKVM (66 aa). The segment at 1–102 is interaction with NDEL1; the sequence is MVLSQRQRDE…EWIPRPPEKY (102 aa). Residues 7 to 39 form the LisH domain; the sequence is QRDELNRAIADYLRSNGYEEAYSVFKKEAELDM. Lys53 carries the N6-acetyllysine modification. The stretch at 56-82 forms a coiled coil; sequence TSVIRLQKKVMELESKLNEAKEEFTSG. The segment at 83–410 is interaction with dynein and dynactin; that stretch reads GPLGQKRDPK…DQTVKVWECR (328 aa). 7 WD repeats span residues 106 to 147, 148 to 187, 190 to 229, 232 to 271, 274 to 333, 336 to 377, and 378 to 410; these read GHRS…RTLK, GHTD…CIRT, GHDH…CVKT, GHRE…CKAE, EHEH…CLMT, GHDN…KTLN, and AHEH…WECR. A Phosphoserine modification is found at Ser109. The tract at residues 367-409 is interaction with DCX; it reads YKNKRCMKTLNAHEHFVTSLDFHKTAPYVVTGSVDQTVKVWEC. The tract at residues 388 to 410 is interaction with NDEL1; it reads FHKTAPYVVTGSVDQTVKVWECR.

The protein belongs to the WD repeat LIS1/nudF family. As to quaternary structure, can self-associate. Component of the cytosolic PAF-AH (I) heterotetrameric enzyme, which is composed of PAFAH1B1 (beta), PAFAH1B2 (alpha2) and PAFAH1B3 (alpha1) subunits. The catalytic activity of the enzyme resides in the alpha1 (PAFAH1B3) and alpha2 (PAFAH1B2) subunits, whereas the beta subunit (PAFAH1B1) has regulatory activity. Trimer formation is not essential for the catalytic activity. Interacts with the catalytic dimer of PAF-AH (I) heterotetrameric enzyme: interacts with PAFAH1B2 homodimer (alpha2/alpha2 homodimer), PAFAH1B3 homodimer (alpha1/alpha1 homodimer) and PAFAH1B2-PAFAH1B3 heterodimer (alpha2/alpha1 heterodimer). Interacts with DCX, dynein, dynactin, IQGAP1, KATNB1, NDE1, NDEL1, NUDC and RSN. Interacts with DISC1, and this interaction is enhanced by NDEL1. Interacts with DAB1 when DAB1 is phosphorylated in response to RELN/reelin signaling. Interacts with INTS13. Interacts with DCDC1.

It localises to the cytoplasm. It is found in the cytoskeleton. The protein localises to the microtubule organizing center. The protein resides in the centrosome. Its subcellular location is the spindle. It localises to the nucleus membrane. In terms of biological role, regulatory subunit (beta subunit) of the cytosolic type I platelet-activating factor (PAF) acetylhydrolase (PAF-AH (I)), an enzyme that catalyzes the hydrolyze of the acetyl group at the sn-2 position of PAF and its analogs and participates in PAF inactivation. Regulates the PAF-AH (I) activity in a catalytic dimer composition-dependent manner. Positively regulates the activity of the minus-end directed microtubule motor protein dynein. May enhance dynein-mediated microtubule sliding by targeting dynein to the microtubule plus end. Required for several dynein- and microtubule-dependent processes such as the maintenance of Golgi integrity, the peripheral transport of microtubule fragments and the coupling of the nucleus and centrosome. Required during brain development for the proliferation of neuronal precursors and the migration of newly formed neurons from the ventricular/subventricular zone toward the cortical plate. Neuronal migration involves a process called nucleokinesis, whereby migrating cells extend an anterior process into which the nucleus subsequently translocates. During nucleokinesis dynein at the nuclear surface may translocate the nucleus towards the centrosome by exerting force on centrosomal microtubules. Also required for proper activation of Rho GTPases and actin polymerization at the leading edge of locomoting cerebellar neurons and postmigratory hippocampal neurons in response to calcium influx triggered via NMDA receptors. May also play a role in other forms of cell locomotion including the migration of fibroblasts during wound healing. Required for dynein recruitment to microtubule plus ends and BICD2-bound cargos. May modulate the Reelin pathway through interaction of the PAF-AH (I) catalytic dimer with VLDLR. The polypeptide is Platelet-activating factor acetylhydrolase IB subunit alpha (Macaca fascicularis (Crab-eating macaque)).